The following is a 250-amino-acid chain: Octanoyltransferase (250 aa).

Positions 49 to 230 (DEINDVILVL…ALDDAFAGRL (182 aa)) constitute a BPL/LPL catalytic domain. Residues 87–94 (RGGRITWH), 160–162 (ALG), and 173–175 (GLA) contribute to the substrate site. The Acyl-thioester intermediate role is filled by Cys191.

It belongs to the LipB family.

It localises to the cytoplasm. The enzyme catalyses octanoyl-[ACP] + L-lysyl-[protein] = N(6)-octanoyl-L-lysyl-[protein] + holo-[ACP] + H(+). The protein operates within protein modification; protein lipoylation via endogenous pathway; protein N(6)-(lipoyl)lysine from octanoyl-[acyl-carrier-protein]: step 1/2. In terms of biological role, catalyzes the transfer of endogenously produced octanoic acid from octanoyl-acyl-carrier-protein onto the lipoyl domains of lipoate-dependent enzymes. Lipoyl-ACP can also act as a substrate although octanoyl-ACP is likely to be the physiological substrate. The sequence is that of Octanoyltransferase from Corynebacterium diphtheriae (strain ATCC 700971 / NCTC 13129 / Biotype gravis).